A 156-amino-acid polypeptide reads, in one-letter code: Inorganic triphosphatase (156 aa).

The CYTH domain occupies 2–148 (GKEIEKKFIV…PRYLNSNLVK (147 aa)). Catalysis depends on Y29, which acts as the Proton acceptor.

In terms of assembly, homodimer.

The catalysed reaction is triphosphate + H2O = phosphate + diphosphate. The enzyme catalyses ATP + H2O = ADP + phosphate + H(+). In terms of biological role, involved in the hydrolysis of the beta-gamma-phosphoanhydride linkage of triphosphate-containing substrates (inorganic or nucleoside-linked). Catalyzes vigorously the hydrolysis of inorganic triphosphate (PPPi), however it can also catalyze the hydrolysis of ATP to ADP and phosphate. It can use ribonucleotides such as GTP, CTP, or UTP and deoxynucleotides such as dATP, dGTP, dCTP, and dTTP. The chain is Inorganic triphosphatase from Acetivibrio thermocellus (strain ATCC 27405 / DSM 1237 / JCM 9322 / NBRC 103400 / NCIMB 10682 / NRRL B-4536 / VPI 7372) (Clostridium thermocellum).